Here is a 269-residue protein sequence, read N- to C-terminus: 4-hydroxy-tetrahydrodipicolinate reductase (269 aa).

Residues 13–18 (GASGRM) and Asp39 contribute to the NAD(+) site. Residue Arg40 coordinates NADP(+). Residues 101–103 (GTT) and 125–128 (APNM) contribute to the NAD(+) site. His158 functions as the Proton donor/acceptor in the catalytic mechanism. His159 is a binding site for (S)-2,3,4,5-tetrahydrodipicolinate. Lys162 (proton donor) is an active-site residue. (S)-2,3,4,5-tetrahydrodipicolinate is bound at residue 168-169 (GT).

This sequence belongs to the DapB family.

It localises to the cytoplasm. It catalyses the reaction (S)-2,3,4,5-tetrahydrodipicolinate + NAD(+) + H2O = (2S,4S)-4-hydroxy-2,3,4,5-tetrahydrodipicolinate + NADH + H(+). The catalysed reaction is (S)-2,3,4,5-tetrahydrodipicolinate + NADP(+) + H2O = (2S,4S)-4-hydroxy-2,3,4,5-tetrahydrodipicolinate + NADPH + H(+). It functions in the pathway amino-acid biosynthesis; L-lysine biosynthesis via DAP pathway; (S)-tetrahydrodipicolinate from L-aspartate: step 4/4. Catalyzes the conversion of 4-hydroxy-tetrahydrodipicolinate (HTPA) to tetrahydrodipicolinate. The chain is 4-hydroxy-tetrahydrodipicolinate reductase from Bordetella pertussis (strain Tohama I / ATCC BAA-589 / NCTC 13251).